The primary structure comprises 703 residues: Polyribonucleotide nucleotidyltransferase (703 aa).

The Mg(2+) site is built by D489 and D495. The 60-residue stretch at 556–615 (PTMIAMKIDTDKIRDVIGKGGATIRAICEETKASIDIEDDGSIKIFGETKEAAEAARQRV) folds into the KH domain. The S1 motif domain maps to 625–693 (GKIYVGKVER…NRGRIKLSIK (69 aa)).

Belongs to the polyribonucleotide nucleotidyltransferase family. Component of the RNA degradosome, which is a multiprotein complex involved in RNA processing and mRNA degradation. The cofactor is Mg(2+).

The protein resides in the cytoplasm. It catalyses the reaction RNA(n+1) + phosphate = RNA(n) + a ribonucleoside 5'-diphosphate. Functionally, involved in mRNA degradation. Catalyzes the phosphorolysis of single-stranded polyribonucleotides processively in the 3'- to 5'-direction. In Pseudomonas fluorescens (strain ATCC BAA-477 / NRRL B-23932 / Pf-5), this protein is Polyribonucleotide nucleotidyltransferase.